The following is a 206-amino-acid chain: 3-isopropylmalate dehydratase small subunit (206 aa).

The protein belongs to the LeuD family. LeuD type 1 subfamily. As to quaternary structure, heterodimer of LeuC and LeuD.

The catalysed reaction is (2R,3S)-3-isopropylmalate = (2S)-2-isopropylmalate. It participates in amino-acid biosynthesis; L-leucine biosynthesis; L-leucine from 3-methyl-2-oxobutanoate: step 2/4. Its function is as follows. Catalyzes the isomerization between 2-isopropylmalate and 3-isopropylmalate, via the formation of 2-isopropylmaleate. The chain is 3-isopropylmalate dehydratase small subunit from Leptospira borgpetersenii serovar Hardjo-bovis (strain JB197).